The following is a 139-amino-acid chain: Large ribosomal subunit protein uL16 (139 aa).

It belongs to the universal ribosomal protein uL16 family. In terms of assembly, part of the 50S ribosomal subunit.

Its function is as follows. Binds 23S rRNA and is also seen to make contacts with the A and possibly P site tRNAs. This Parvibaculum lavamentivorans (strain DS-1 / DSM 13023 / NCIMB 13966) protein is Large ribosomal subunit protein uL16.